The primary structure comprises 1441 residues: Tyrosine-protein kinase BAZ1B (1441 aa).

A WAC domain is found at glutamate 26–proline 132. Positions glutamate 147–serine 171 are enriched in basic and acidic residues. 4 disordered regions span residues glutamate 147–lysine 212, asparagine 307–tryptophan 338, asparagine 364–leucine 445, and arginine 531–glutamate 555. The span at glutamine 386–threonine 397 shows a compositional bias: polar residues. The segment covering arginine 398–lysine 408 has biased composition (basic residues). Positions glycine 430–proline 441 are enriched in polar residues. Residues threonine 513–aspartate 558 adopt a coiled-coil conformation. In terms of domain architecture, DDT spans asparagine 578–alanine 642. Disordered stretches follow at residues serine 675–tyrosine 696, aspartate 766–glutamate 785, glutamine 823–alanine 858, and proline 911–valine 949. Over residues glycine 686 to tyrosine 696 the composition is skewed to acidic residues. Basic and acidic residues-rich tracts occupy residues lysine 776–glutamate 785, alanine 824–alanine 858, and serine 937–glutamate 946. A coiled-coil region spans residues alanine 813 to glutamate 861. Residues alanine 1080 to alanine 1113 are a coiled coil. The segment at asparagine 1151 to alanine 1201 adopts a PHD-type zinc-finger fold. 2 disordered regions span residues arginine 1204–glutamine 1308 and histidine 1408–lysine 1441. Residues alanine 1213 to serine 1253 are a coiled coil. The segment covering serine 1216–glutamate 1245 has biased composition (acidic residues). A compositionally biased stretch (basic residues) spans leucine 1251 to proline 1270. The span at serine 1299–glutamine 1308 shows a compositional bias: polar residues. Residues arginine 1304 to histidine 1408 enclose the Bromo domain.

This sequence belongs to the WAL family. BAZ1B subfamily. As to quaternary structure, interacts with smarca5/snf2h; the interaction is direct and forms the WICH complex. Component of the B-WICH complex. Requires Mn(2+) as cofactor. As to expression, highly expressed in the neural tube.

The protein resides in the nucleus. The enzyme catalyses L-tyrosyl-[protein] + ATP = O-phospho-L-tyrosyl-[protein] + ADP + H(+). Its function is as follows. Atypical tyrosine-protein kinase that plays a central role in chromatin remodeling and acts as a transcription regulator. Involved in DNA damage response by phosphorylating 'Tyr-142' of histone H2AX (H2AXY142ph). H2AXY142ph plays a central role in DNA repair and acts as a mark that distinguishes between apoptotic and repair responses to genotoxic stress. Essential component of the WICH complex, a chromatin remodeling complex that mobilizes nucleosomes and reconfigures irregular chromatin to a regular nucleosomal array structure. The WICH complex regulates the transcription of various genes, has a role in RNA polymerase I and RNA polymerase III transcription, mediates the histone H2AX phosphorylation at 'Tyr-142', and is involved in the maintenance of chromatin structures during DNA replication processes. In Xenopus laevis (African clawed frog), this protein is Tyrosine-protein kinase BAZ1B (baz1b).